The sequence spans 200 residues: Serine/arginine-rich splicing factor RSZ22 (200 aa).

An RRM domain is found at 2 to 71; sequence SRVYVGNLDP…NGWRVEQSHN (70 aa). A compositionally biased stretch (basic and acidic residues) spans 62-83; that stretch reads NGWRVEQSHNRGERGGGGRGGD. Disordered stretches follow at residues 62-97 and 112-200; these read NGWR…RGGS and RECR…RSRS. A compositionally biased stretch (gly residues) spans 84–96; sequence RGGGGGGRGGRGG. The CCHC-type zinc-finger motif lies at 99 to 116; the sequence is LKCYECGETGHFARECRN. Basic residues predominate over residues 120-137; that stretch reads TGRRRSKSRSRTPPRYRR. Phosphoserine is present on residues Ser-138, Ser-147, Ser-152, Ser-160, Ser-162, Ser-174, and Ser-200. The segment covering 138-150 has biased composition (low complexity); sequence SPSYGRRSYSPRA. Residues 151–166 are compositionally biased toward pro residues; it reads RSPPPPRRRSPSPPPA.

Belongs to the splicing factor SR family. RSZ subfamily. In terms of assembly, component of the spliceosome. Interacts with AFC2, RS2Z33 and RNU1. Extensively phosphorylated on serine residues in the RS domain. Phosphorylated by AFC2. In terms of tissue distribution, expressed in primary and lateral roots, stems, petioles, abaxial and adaxial epidermis cells, trichomes, unopened flowers, anther filaments, anthers, stigma, pollen, pollen tube, ovule funiculi, integuments, embryo sac and developing seeds.

The protein localises to the nucleus speckle. It localises to the nucleus. It is found in the nucleolus. The protein resides in the nucleoplasm. Its subcellular location is the cytoplasm. Its function is as follows. Sequence-specific RNA-binding protein probably involved in pre-mRNA splicing. In vitro, can complement efficiently splicing-deficient mammalian SRSF7-depleted HeLa cell extract. The chain is Serine/arginine-rich splicing factor RSZ22 (RSZ22) from Arabidopsis thaliana (Mouse-ear cress).